A 299-amino-acid chain; its full sequence is Secreted LysM effector ldpB (299 aa).

Residues 1–19 form the signal peptide; that stretch reads MGLTSILIAQVLFLGAANS. LysM domains are found at residues 46–91, 135–182, and 211–258; these read WVND…SYCV, AFYK…YVCI, and KYHK…YVCV. The N-linked (GlcNAc...) asparagine glycan is linked to N154. Over residues 266 to 283 the composition is skewed to low complexity; the sequence is ATATPQPTPQPQQSSSPD. The tract at residues 266–288 is disordered; that stretch reads ATATPQPTPQPQQSSSPDQPMPQ.

It belongs to the secreted LysM effector family.

It localises to the secreted. It is found in the cell wall. The protein localises to the extracellular space. The protein resides in the extracellular matrix. Its function is as follows. Cell wall chitin of A.fumigatus recruits lung eosinophils during infection and ldpB might have a role in sequestration of chitin and act as triggers of host immunity to dampen host defense. The polypeptide is Secreted LysM effector ldpB (Aspergillus fumigatus (strain ATCC MYA-4609 / CBS 101355 / FGSC A1100 / Af293) (Neosartorya fumigata)).